The following is a 286-amino-acid chain: Interferon-induced 35 kDa protein (286 aa).

The leucine-zipper stretch occupies residues 5–26 (LDAALHALQEEQARLKMRLWDL). 2 consecutive NID domains span residues 81–170 (ALIT…GDVD) and 183–266 (FARD…GEVE).

This sequence belongs to the NMI family. Homodimer. Also interacts with BATF. Interacts with TRIM21. Interacts with NMI; the interaction is direct and is facilitated by TRIM21. In terms of processing, phosphorylated. Dephosphorylation correlates with the formation of a complex with NMI. As to expression, expressed in a wide range of cell types, including fibroblasts, macrophages, and epithelial cells.

The protein localises to the cytoplasm. It is found in the nucleus. Its subcellular location is the secreted. Functionally, acts as a signaling pathway regulator involved in innate immune system response. In response to interferon IFN-alpha, associates in a complex with signaling pathway regulator NMI to regulate immune response; the complex formation prevents proteasome-mediated degradation of IFI35 and correlates with IFI35 dephosphorylation. In complex with NMI, inhibits virus-triggered type I interferon/IFN-beta production. In complex with NMI, negatively regulates nuclear factor NF-kappa-B signaling by inhibiting the nuclear translocation, activation and transcription of the NF-kappa-B subunit p65/RELA, resulting in the inhibition of endothelial cell proliferation, migration and re-endothelialization of injured arteries. Beside its role as an intracellular signaling pathway regulator, also functions extracellularly as damage-associated molecular patterns (DAMPs) to promote inflammation when actively released by macrophage to the extracellular space during cell injury and pathogen invasion. Macrophage-secreted IFI35 activates NF-kappa-B signaling in adjacent macrophages through Toll-like receptor 4/TLR4 activation, thereby inducing NF-kappa-B translocation from the cytoplasm into the nucleus which promotes the release of pro-inflammatory cytokines. This chain is Interferon-induced 35 kDa protein, found in Homo sapiens (Human).